The sequence spans 479 residues: Adenosylhomocysteinase (479 aa).

3 residues coordinate substrate: threonine 56, aspartate 133, and glutamate 199. An NAD(+)-binding site is contributed by 200-202; the sequence is TTT. Positions 229 and 233 each coordinate substrate. Residues asparagine 234, 263–268, glutamate 286, asparagine 321, 342–344, and asparagine 390 contribute to the NAD(+) site; these read GYGDVG and IGH.

It belongs to the adenosylhomocysteinase family. In terms of assembly, homotetramer. NAD(+) serves as cofactor.

It carries out the reaction S-adenosyl-L-homocysteine + H2O = L-homocysteine + adenosine. It participates in amino-acid biosynthesis; L-homocysteine biosynthesis; L-homocysteine from S-adenosyl-L-homocysteine: step 1/1. Functionally, adenosylhomocysteine is a competitive inhibitor of S-adenosyl-L-methionine-dependent methyl transferase reactions; therefore adenosylhomocysteinase may play a key role in the control of methylations via regulation of the intracellular concentration of adenosylhomocysteine. The protein is Adenosylhomocysteinase of Plasmodium chabaudi chabaudi.